Reading from the N-terminus, the 190-residue chain is Putative triphosphatase YjbK (190 aa).

Residues 4-189 (EIEIEFKNML…LRFYEEKRKS (186 aa)) form the CYTH domain.

This is Putative triphosphatase YjbK (yjbK) from Bacillus subtilis (strain 168).